The sequence spans 367 residues: Acryloyl-CoA reductase electron transfer subunit beta (367 aa).

305-333 is a binding site for FAD; sequence VYVALGISGAIQHKAGMQDSELIIAVNKD.

As to quaternary structure, heterohexadecamer; tetramer of tetramers. Each tetramer is composed of 2 alpha (AcrC), a beta (AcrA) and a gamma (AcrB) subunit.

The protein localises to the cytoplasm. Part of the ETF-acryloyl-CoA reductase complex involved in the pathway of L-alanine fermentation. The electron transfer flavoprotein (ETF) serves as a specific electron acceptor for acryloyl-CoA reductase. This Anaerotignum propionicum (Clostridium propionicum) protein is Acryloyl-CoA reductase electron transfer subunit beta (acrA).